A 318-amino-acid polypeptide reads, in one-letter code: Protein RecA (318 aa).

Residue 53 to 60 (GPESSGKT) participates in ATP binding.

The protein belongs to the RecA family.

Its subcellular location is the cytoplasm. Its function is as follows. Can catalyze the hydrolysis of ATP in the presence of single-stranded DNA, the ATP-dependent uptake of single-stranded DNA by duplex DNA, and the ATP-dependent hybridization of homologous single-stranded DNAs. It interacts with LexA causing its activation and leading to its autocatalytic cleavage. This chain is Protein RecA, found in Bacteroides fragilis (strain YCH46).